Reading from the N-terminus, the 673-residue chain is UvrABC system protein C (673 aa).

Residues 16–95 form the GIY-YIG domain; sequence VEPGVYKFRD…IKEFDPRFNV (80 aa). Residues 208–243 form the UVR domain; that stretch reads DKMVRELERRMHAAAEDLDFETAARLRDDVQALRRA. A disordered region spans residues 488–526; the sequence is RDEAERDELDGTAAGAPLVDDDETPTSRPGIDPTTGRPR.

The protein belongs to the UvrC family. In terms of assembly, interacts with UvrB in an incision complex.

The protein localises to the cytoplasm. In terms of biological role, the UvrABC repair system catalyzes the recognition and processing of DNA lesions. UvrC both incises the 5' and 3' sides of the lesion. The N-terminal half is responsible for the 3' incision and the C-terminal half is responsible for the 5' incision. The sequence is that of UvrABC system protein C from Nocardia farcinica (strain IFM 10152).